Consider the following 211-residue polypeptide: Ribosomal RNA large subunit methyltransferase E (211 aa).

Gly60, Trp62, Asp80, Asp96, and Asp121 together coordinate S-adenosyl-L-methionine. Residue Lys161 is the Proton acceptor of the active site.

This sequence belongs to the class I-like SAM-binding methyltransferase superfamily. RNA methyltransferase RlmE family.

The protein resides in the cytoplasm. It catalyses the reaction uridine(2552) in 23S rRNA + S-adenosyl-L-methionine = 2'-O-methyluridine(2552) in 23S rRNA + S-adenosyl-L-homocysteine + H(+). Specifically methylates the uridine in position 2552 of 23S rRNA at the 2'-O position of the ribose in the fully assembled 50S ribosomal subunit. The chain is Ribosomal RNA large subunit methyltransferase E from Cellvibrio japonicus (strain Ueda107) (Pseudomonas fluorescens subsp. cellulosa).